We begin with the raw amino-acid sequence, 303 residues long: Zinc import ATP-binding protein ZnuC (303 aa).

The ABC transporter domain maps to 17 to 232; it reads VSLENVGVLR…PEYVRLFGSR (216 aa). 49–56 serves as a coordination point for ATP; it reads GPNGSGKS. Residues 263–303 are disordered; sequence DHCHPDDGHHAHEHGHAGHEHDHDHPDHAHPHAHEAGERHA.

This sequence belongs to the ABC transporter superfamily. Zinc importer (TC 3.A.1.15.5) family. The complex is composed of two ATP-binding proteins (ZnuC), two transmembrane proteins (ZnuB) and a solute-binding protein (ZnuA).

It localises to the cell inner membrane. It catalyses the reaction Zn(2+)(out) + ATP(in) + H2O(in) = Zn(2+)(in) + ADP(in) + phosphate(in) + H(+)(in). Its function is as follows. Part of the ABC transporter complex ZnuABC involved in zinc import. Responsible for energy coupling to the transport system. This Rhizobium johnstonii (strain DSM 114642 / LMG 32736 / 3841) (Rhizobium leguminosarum bv. viciae) protein is Zinc import ATP-binding protein ZnuC.